Reading from the N-terminus, the 475-residue chain is ATP synthase subunit beta 1 (475 aa).

152–159 (GGAGVGKT) contacts ATP.

The protein belongs to the ATPase alpha/beta chains family. F-type ATPases have 2 components, CF(1) - the catalytic core - and CF(0) - the membrane proton channel. CF(1) has five subunits: alpha(3), beta(3), gamma(1), delta(1), epsilon(1). CF(0) has four main subunits: a(1), b(1), b'(1) and c(9-12).

The protein localises to the cell inner membrane. It catalyses the reaction ATP + H2O + 4 H(+)(in) = ADP + phosphate + 5 H(+)(out). In terms of biological role, produces ATP from ADP in the presence of a proton gradient across the membrane. The catalytic sites are hosted primarily by the beta subunits. The polypeptide is ATP synthase subunit beta 1 (Cereibacter sphaeroides (strain ATCC 17029 / ATH 2.4.9) (Rhodobacter sphaeroides)).